The sequence spans 1015 residues: DExH-box ATP-dependent RNA helicase DExH8 (1015 aa).

The Helicase ATP-binding domain occupies 36–197 (IDKILENRVT…FKELGRGERV (162 aa)). 49–56 (GEPGCGKS) provides a ligand contact to ATP. A DEVH box motif is present at residues 144 to 147 (DEVH). The region spanning 254 to 419 (LIHDLILYIH…KLSLRQQVLH (166 aa)) is the Helicase C-terminal domain. C3H1-type zinc fingers lie at residues 727-753 (YGEA…THTL) and 754-782 (QSTR…HAMR).

Belongs to the DExH box helicase family.

It catalyses the reaction ATP + H2O = ADP + phosphate + H(+). This is DExH-box ATP-dependent RNA helicase DExH8 from Arabidopsis thaliana (Mouse-ear cress).